Here is a 177-residue protein sequence, read N- to C-terminus: dCTP deaminase, dUMP-forming (177 aa).

Residues 95-100 (RSSLGR), Asp-112, 120-122 (TLE), Gln-141, Tyr-155, and Gln-162 contribute to the dCTP site. The active-site Proton donor/acceptor is Glu-122.

Belongs to the dCTP deaminase family. In terms of assembly, homotrimer.

It catalyses the reaction dCTP + 2 H2O = dUMP + NH4(+) + diphosphate. Its pathway is pyrimidine metabolism; dUMP biosynthesis; dUMP from dCTP: step 1/1. Bifunctional enzyme that catalyzes both the deamination of dCTP to dUTP and the hydrolysis of dUTP to dUMP without releasing the toxic dUTP intermediate. This Hydrogenobaculum sp. (strain Y04AAS1) protein is dCTP deaminase, dUMP-forming.